Here is a 130-residue protein sequence, read N- to C-terminus: Glycine cleavage system H protein (130 aa).

Positions 23-105 (IGIIGITDFA…YGKGWMIKVE (83 aa)) constitute a Lipoyl-binding domain. Lys-64 is modified (N6-lipoyllysine).

Belongs to the GcvH family. As to quaternary structure, the glycine cleavage system is composed of four proteins: P, T, L and H. It depends on (R)-lipoate as a cofactor.

The glycine cleavage system catalyzes the degradation of glycine. The H protein shuttles the methylamine group of glycine from the P protein to the T protein. In Carboxydothermus hydrogenoformans (strain ATCC BAA-161 / DSM 6008 / Z-2901), this protein is Glycine cleavage system H protein.